A 505-amino-acid polypeptide reads, in one-letter code: ATP synthase subunit beta (505 aa).

157–164 is an ATP binding site; sequence GGAGVGKT.

It belongs to the ATPase alpha/beta chains family. As to quaternary structure, F-type ATPases have 2 components, CF(1) - the catalytic core - and CF(0) - the membrane proton channel. CF(1) has five subunits: alpha(3), beta(3), gamma(1), delta(1), epsilon(1). CF(0) has three main subunits: a(1), b(2) and c(9-12). The alpha and beta chains form an alternating ring which encloses part of the gamma chain. CF(1) is attached to CF(0) by a central stalk formed by the gamma and epsilon chains, while a peripheral stalk is formed by the delta and b chains.

It localises to the cell inner membrane. It carries out the reaction ATP + H2O + 4 H(+)(in) = ADP + phosphate + 5 H(+)(out). Produces ATP from ADP in the presence of a proton gradient across the membrane. The catalytic sites are hosted primarily by the beta subunits. In Bacteroides fragilis (strain ATCC 25285 / DSM 2151 / CCUG 4856 / JCM 11019 / LMG 10263 / NCTC 9343 / Onslow / VPI 2553 / EN-2), this protein is ATP synthase subunit beta.